A 141-amino-acid chain; its full sequence is Putative pre-16S rRNA nuclease (141 aa).

This sequence belongs to the YqgF nuclease family.

The protein localises to the cytoplasm. Could be a nuclease involved in processing of the 5'-end of pre-16S rRNA. The chain is Putative pre-16S rRNA nuclease from Cupriavidus necator (strain ATCC 17699 / DSM 428 / KCTC 22496 / NCIMB 10442 / H16 / Stanier 337) (Ralstonia eutropha).